The chain runs to 39 residues: Cecropin (39 aa).

Its subcellular location is the secreted. Functionally, antibacterial peptide active against Gram-negative bacterium E.coli. Has no activity against Gram-positive bacterium M.luteus. Weakly active against M.luteus. This is Cecropin from Calliphora vicina (Blue blowfly).